Reading from the N-terminus, the 316-residue chain is MTTKLEQLRKLTTVVADTGDIEAIAKYTPEDATTNPSLILKAAEITEYAPLIDASIEYAKAQSNDKAQQVQDTCDMLAVNIGKEILKVVPGRISTEVDARLSYDTEGSVAKARQLIKMYNDAGITNDRILIKLASTWEGIRAAEILEKEGINCNLTLLFSFAQARACAEAGVYLISPFVGRIMDWYKAKEGRDFEPSEDPGVVSVTGIYNYYKEHGYNTVVMGASFRNIGEILELAGCDRLTISPNLLQELEEATGEVVEKLVDTNGNKARPAAMTHAEFLWDHNQDAMAVEKLAEGIRNFAVDQGKLEAMIAAKL.

Catalysis depends on Lys132, which acts as the Schiff-base intermediate with substrate.

It belongs to the transaldolase family. Type 1 subfamily. In terms of assembly, homodimer.

The protein resides in the cytoplasm. The catalysed reaction is D-sedoheptulose 7-phosphate + D-glyceraldehyde 3-phosphate = D-erythrose 4-phosphate + beta-D-fructose 6-phosphate. Its pathway is carbohydrate degradation; pentose phosphate pathway; D-glyceraldehyde 3-phosphate and beta-D-fructose 6-phosphate from D-ribose 5-phosphate and D-xylulose 5-phosphate (non-oxidative stage): step 2/3. In terms of biological role, transaldolase is important for the balance of metabolites in the pentose-phosphate pathway. This chain is Transaldolase, found in Aliivibrio fischeri (strain MJ11) (Vibrio fischeri).